The following is an 845-amino-acid chain: Beta-glucosidase (845 aa).

An N-linked (GlcNAc...) asparagine glycan is attached at asparagine 66. Aspartate 225 is a catalytic residue. N-linked (GlcNAc...) asparagine glycans are attached at residues asparagine 304, asparagine 438, and asparagine 621. A PA14 domain is found at 408–568 (AENAGLIAKF…DDDEEIRNAA (161 aa)).

Belongs to the glycosyl hydrolase 3 family. In terms of assembly, homotetramer.

The catalysed reaction is Hydrolysis of terminal, non-reducing beta-D-glucosyl residues with release of beta-D-glucose.. It functions in the pathway glycan metabolism; cellulose degradation. The polypeptide is Beta-glucosidase (Kluyveromyces marxianus (Yeast)).